Consider the following 323-residue polypeptide: MASITNILAPVENELDLLTKNLKKLVGSGHPILSAASEHLFSASGKRPRPAIVLLISKATMENEIITSRHRRLAEITEIIHTASLVHDDILDESDVRRGIPTVHSDFGTKIAILAGDFLFAQSSWYLANLESLEVVKLISKVITDFAEGEIRRGLNQFKVDLTLEEYLEKSFYKTASLLAASSKAAALLSHVDLTVANDLYNYGRHLGLAFQIVDDILDFTSSTEELGKPSCSDLKKGNLTAPVLFALEQNSELIPLIQRQFSEPKDFEYTLQIVEETKAIEKTRELAMEHAQVAIQCLENLPPSSSKEALKLITKYVLERLY.

Isopentenyl diphosphate contacts are provided by lysine 46, arginine 49, and histidine 81. Residues aspartate 88 and aspartate 92 each contribute to the Mg(2+) site. Arginine 97 serves as a coordination point for an all-trans-polyprenyl diphosphate. An isopentenyl diphosphate-binding site is contributed by arginine 98. 3 residues coordinate an all-trans-polyprenyl diphosphate: lysine 174, threonine 175, and glutamine 212.

It belongs to the FPP/GGPP synthase family. Mg(2+) serves as cofactor.

The protein localises to the plastid. Its subcellular location is the cyanelle. In terms of biological role, possible role in synthesis of the nonaprenyl side chain of plastoquinone or in synthesis of other prenyl chains such as undekaprenyl pyrophosphate. In Cyanophora paradoxa, this protein is Prenyl transferase (preA).